Here is a 204-residue protein sequence, read N- to C-terminus: Translation initiation factor IF-3 (204 aa).

Positions 169–204 are disordered; it reads VPKAAPKRDSGRSESAQEAPTARSAEASRPEAPANA.

Belongs to the IF-3 family. Monomer.

Its subcellular location is the cytoplasm. Functionally, IF-3 binds to the 30S ribosomal subunit and shifts the equilibrium between 70S ribosomes and their 50S and 30S subunits in favor of the free subunits, thus enhancing the availability of 30S subunits on which protein synthesis initiation begins. This chain is Translation initiation factor IF-3, found in Deinococcus geothermalis (strain DSM 11300 / CIP 105573 / AG-3a).